The following is a 555-amino-acid chain: Poly(A) polymerase PAPa (555 aa).

Residues 1–20 (MNNQAYGVTPPISVANSTPK) form a disordered region. Residues 86–88 (FGS), 99–101 (DID), aspartate 153, lysine 214, tyrosine 223, and 232–233 (GV) each bind ATP. 3 residues coordinate Mg(2+): aspartate 99, aspartate 101, and aspartate 153. The segment at 532–555 (KRKRAVSKNEGKKKPKSVGTVSAA) is disordered.

The protein belongs to the poly(A) polymerase family. The cofactor is Mg(2+). It depends on Mn(2+) as a cofactor.

It localises to the nucleus. It catalyses the reaction RNA(n) + ATP = RNA(n)-3'-adenine ribonucleotide + diphosphate. Polymerase that creates the 3'-poly(A) tail of mRNA's. May acquire specificity through interaction with a cleavage and polyadenylation factor. The polypeptide is Poly(A) polymerase PAPa (PAPA) (Candida albicans (strain SC5314 / ATCC MYA-2876) (Yeast)).